The chain runs to 358 residues: Probable D-xylulose reductase A (358 aa).

Residues Cys-47, His-72, and Glu-73 each contribute to the Zn(2+) site. Residue 182–187 (GAGPVG) participates in NAD(+) binding.

Belongs to the zinc-containing alcohol dehydrogenase family. The cofactor is Zn(2+).

The catalysed reaction is xylitol + NAD(+) = D-xylulose + NADH + H(+). It functions in the pathway carbohydrate degradation; L-arabinose degradation via L-arabinitol; D-xylulose 5-phosphate from L-arabinose (fungal route): step 4/5. Xylitol dehydrogenase which catalyzes the conversion of xylitol to D-xylulose. Xylose is a major component of hemicelluloses such as xylan. Most fungi utilize D-xylose via three enzymatic reactions, xylose reductase (XR), xylitol dehydrogenase (XDH), and xylulokinase, to form xylulose 5-phosphate, which enters pentose phosphate pathway. The chain is Probable D-xylulose reductase A (xdhA) from Aspergillus fumigatus (strain CBS 144.89 / FGSC A1163 / CEA10) (Neosartorya fumigata).